The primary structure comprises 464 residues: Sugar transporter ERD6-like 1 (464 aa).

12 consecutive transmembrane segments (helical) span residues 23-43 (ITCG…VYGC), 72-92 (VMTL…AVIG), 95-115 (QTMW…AFAH), 125-145 (GFLG…IAEI), 156-176 (FSNQ…GNFF), 180-200 (TLAL…FFIP), 263-283 (LIIG…AISA), 298-318 (IGTS…MFAV), 326-346 (LLMS…LSYY), 359-379 (PILI…LGGL), 399-419 (LVTV…NFMM), and 424-444 (FGTY…VWTL).

The protein belongs to the major facilitator superfamily. Sugar transporter (TC 2.A.1.1) family.

The protein localises to the membrane. Sugar transporter. This chain is Sugar transporter ERD6-like 1 (SUGTL4), found in Arabidopsis thaliana (Mouse-ear cress).